Here is a 313-residue protein sequence, read N- to C-terminus: Ribosomal RNA small subunit methyltransferase I (313 aa).

A disordered region spans residues 1 to 23 (MASIQLARTTRGGDGVARADGTR).

This sequence belongs to the methyltransferase superfamily. RsmI family.

It localises to the cytoplasm. The catalysed reaction is cytidine(1402) in 16S rRNA + S-adenosyl-L-methionine = 2'-O-methylcytidine(1402) in 16S rRNA + S-adenosyl-L-homocysteine + H(+). Its function is as follows. Catalyzes the 2'-O-methylation of the ribose of cytidine 1402 (C1402) in 16S rRNA. In Micromonospora olivasterospora, this protein is Ribosomal RNA small subunit methyltransferase I.